Reading from the N-terminus, the 476-residue chain is Zinc finger CCCH domain-containing protein 6 (476 aa).

Residues 1–10 (MEQPHAAAAA) are compositionally biased toward low complexity. Positions 1 to 57 (MEQPHAAAAAAGGGEGEGGASPDTGLEGPMWRMGLGGGGGGGGGGGGGDGDAAGRLP) are disordered. Residues 34–51 (GLGGGGGGGGGGGGGDGD) show a composition bias toward gly residues. 3 consecutive C3H1-type zinc fingers follow at residues 59–87 (RPGE…HPRD), 108–136 (RAGQ…HPKQ), and 153–181 (RLGE…HPEF). The segment covering 290 to 301 (SSTGQSSNNQQE) has biased composition (polar residues). Positions 290–309 (SSTGQSSNNQQEHGFPERPG) are disordered. 2 C3H1-type zinc fingers span residues 307 to 335 (RPGQ…HPRE) and 353 to 381 (RPGA…HPMG). The disordered stretch occupies residues 456–476 (TMMRAQTNTTSGGSSSPGGGR).

It localises to the nucleus. The chain is Zinc finger CCCH domain-containing protein 6 from Oryza sativa subsp. japonica (Rice).